The sequence spans 190 residues: dCTP deaminase (190 aa).

Residues lysine 113 to arginine 118, threonine 137 to glutamate 139, glutamine 158, tyrosine 172, and glutamine 182 contribute to the dCTP site. The Proton donor/acceptor role is filled by glutamate 139.

The protein belongs to the dCTP deaminase family. Homotrimer.

The enzyme catalyses dCTP + H2O + H(+) = dUTP + NH4(+). The protein operates within pyrimidine metabolism; dUMP biosynthesis; dUMP from dCTP (dUTP route): step 1/2. Functionally, catalyzes the deamination of dCTP to dUTP. This Chromobacterium violaceum (strain ATCC 12472 / DSM 30191 / JCM 1249 / CCUG 213 / NBRC 12614 / NCIMB 9131 / NCTC 9757 / MK) protein is dCTP deaminase.